We begin with the raw amino-acid sequence, 208 residues long: ATP-dependent Clp protease proteolytic subunit (208 aa).

S107 functions as the Nucleophile in the catalytic mechanism. H132 is a catalytic residue.

Belongs to the peptidase S14 family. As to quaternary structure, fourteen ClpP subunits assemble into 2 heptameric rings which stack back to back to give a disk-like structure with a central cavity, resembling the structure of eukaryotic proteasomes.

The protein localises to the cytoplasm. The catalysed reaction is Hydrolysis of proteins to small peptides in the presence of ATP and magnesium. alpha-casein is the usual test substrate. In the absence of ATP, only oligopeptides shorter than five residues are hydrolyzed (such as succinyl-Leu-Tyr-|-NHMec, and Leu-Tyr-Leu-|-Tyr-Trp, in which cleavage of the -Tyr-|-Leu- and -Tyr-|-Trp bonds also occurs).. Cleaves peptides in various proteins in a process that requires ATP hydrolysis. Has a chymotrypsin-like activity. Plays a major role in the degradation of misfolded proteins. This is ATP-dependent Clp protease proteolytic subunit from Methylorubrum extorquens (strain CM4 / NCIMB 13688) (Methylobacterium extorquens).